The sequence spans 456 residues: GTPase Der (456 aa).

EngA-type G domains lie at 3 to 167 (FTIA…PETE) and 185 to 360 (IRVA…AVWN). Residues 9 to 16 (GRPNVGKS), 56 to 60 (DTAGL), 119 to 122 (NKSE), 191 to 198 (GRPNAGKS), 238 to 242 (DTAGL), and 303 to 306 (NKWD) each bind GTP. A KH-like domain is found at 361–445 (RRVPTAALNR…PVRITLREKA (85 aa)).

It belongs to the TRAFAC class TrmE-Era-EngA-EngB-Septin-like GTPase superfamily. EngA (Der) GTPase family. In terms of assembly, associates with the 50S ribosomal subunit.

GTPase that plays an essential role in the late steps of ribosome biogenesis. This Bradyrhizobium sp. (strain BTAi1 / ATCC BAA-1182) protein is GTPase Der.